The chain runs to 741 residues: Catalase-peroxidase 2 (741 aa).

Residues 1–28 (MQRNRIAKSVLAALAVIAMSAGSISARA) form the signal peptide. The tryptophyl-tyrosyl-methioninium (Trp-Tyr) (with M-254) cross-link spans 107 to 228 (WHGAGTYRTY…LAATQMGLIY (122 aa)). The active-site Proton acceptor is the H108. The tryptophyl-tyrosyl-methioninium (Tyr-Met) (with W-107) cross-link spans 228–254 (YVNPEGPNGNPDPVAAAQDIREAFGRM). Residue H269 coordinates heme b.

The protein belongs to the peroxidase family. Peroxidase/catalase subfamily. Homodimer or homotetramer. Requires heme b as cofactor. In terms of processing, formation of the three residue Trp-Tyr-Met cross-link is important for the catalase, but not the peroxidase activity of the enzyme.

The catalysed reaction is H2O2 + AH2 = A + 2 H2O. It catalyses the reaction 2 H2O2 = O2 + 2 H2O. Its function is as follows. Bifunctional enzyme with both catalase and broad-spectrum peroxidase activity. The protein is Catalase-peroxidase 2 of Burkholderia vietnamiensis (strain G4 / LMG 22486) (Burkholderia cepacia (strain R1808)).